The primary structure comprises 149 residues: Transcriptional repressor NrdR (149 aa).

A zinc finger lies at 3 to 34; sequence CPFCSAVDTKVIDSRLVGDGSQVRRRRQCLVC. Residues 49–139 form the ATP-cone domain; that stretch reads PRVVKSNGVR…VYRSFEDVRE (91 aa).

This sequence belongs to the NrdR family. Requires Zn(2+) as cofactor.

Negatively regulates transcription of bacterial ribonucleotide reductase nrd genes and operons by binding to NrdR-boxes. The chain is Transcriptional repressor NrdR from Edwardsiella ictaluri (strain 93-146).